A 475-amino-acid chain; its full sequence is Ribulose bisphosphate carboxylase large chain (475 aa).

Residues 1 to 2 (MS) constitute a propeptide that is removed on maturation. Residue P3 is modified to N-acetylproline. K14 carries the N6,N6,N6-trimethyllysine modification. Residues N123 and T173 each contribute to the substrate site. The active-site Proton acceptor is K175. A substrate-binding site is contributed by K177. Positions 201, 203, and 204 each coordinate Mg(2+). K201 is modified (N6-carboxylysine). The active-site Proton acceptor is H294. Positions 295, 327, and 379 each coordinate substrate.

The protein belongs to the RuBisCO large chain family. Type I subfamily. In terms of assembly, heterohexadecamer of 8 large chains and 8 small chains; disulfide-linked. The disulfide link is formed within the large subunit homodimers. The cofactor is Mg(2+). Post-translationally, the disulfide bond which can form in the large chain dimeric partners within the hexadecamer appears to be associated with oxidative stress and protein turnover.

The protein localises to the plastid. It localises to the chloroplast. It catalyses the reaction 2 (2R)-3-phosphoglycerate + 2 H(+) = D-ribulose 1,5-bisphosphate + CO2 + H2O. The enzyme catalyses D-ribulose 1,5-bisphosphate + O2 = 2-phosphoglycolate + (2R)-3-phosphoglycerate + 2 H(+). Its function is as follows. RuBisCO catalyzes two reactions: the carboxylation of D-ribulose 1,5-bisphosphate, the primary event in carbon dioxide fixation, as well as the oxidative fragmentation of the pentose substrate in the photorespiration process. Both reactions occur simultaneously and in competition at the same active site. The protein is Ribulose bisphosphate carboxylase large chain of Cryptomeria japonica (Japanese cedar).